A 234-amino-acid polypeptide reads, in one-letter code: Urease subunit alpha (234 aa).

The tract at residues 1-102 (MKLTPKELDK…LVTIHTPVEA (102 aa)) is urease gamma. The interval 103 to 234 (GSDKLAPGEV…GTINCGCDNK (132 aa)) is urease beta.

In the N-terminal section; belongs to the urease gamma subunit family. The protein in the C-terminal section; belongs to the urease beta subunit family. Heterohexamer of 3 UreA (alpha) and 3 UreB (beta) subunits.

It is found in the cytoplasm. It catalyses the reaction urea + 2 H2O + H(+) = hydrogencarbonate + 2 NH4(+). Its pathway is nitrogen metabolism; urea degradation; CO(2) and NH(3) from urea (urease route): step 1/1. The chain is Urease subunit alpha from Helicobacter heilmannii.